An 89-amino-acid chain; its full sequence is Small ribosomal subunit protein bS20 (89 aa).

Disordered stretches follow at residues 1-25 (MANI…ASMK) and 69-89 (KNAA…IQAS). Over residues 7 to 20 (AIKRAKTSEKRRAH) the composition is skewed to basic residues.

This sequence belongs to the bacterial ribosomal protein bS20 family.

Binds directly to 16S ribosomal RNA. This chain is Small ribosomal subunit protein bS20, found in Geobacillus thermodenitrificans (strain NG80-2).